The chain runs to 216 residues: Cytidylate kinase (216 aa).

7–15 (GPSGTGKST) lines the ATP pocket.

The protein belongs to the cytidylate kinase family. Type 1 subfamily.

The protein resides in the cytoplasm. The enzyme catalyses CMP + ATP = CDP + ADP. It carries out the reaction dCMP + ATP = dCDP + ADP. The protein is Cytidylate kinase of Chlamydia caviae (strain ATCC VR-813 / DSM 19441 / 03DC25 / GPIC) (Chlamydophila caviae).